Consider the following 54-residue polypeptide: Conotoxin Cal6.17 (54 aa).

Residues 1-19 (MSGTGVLLLTLLLLVTMAT) form the signal peptide. Disulfide bonds link Cys-24-Cys-39, Cys-32-Cys-49, and Cys-38-Cys-53.

As to expression, expressed by the venom duct.

It is found in the secreted. Probable neurotoxin. In Californiconus californicus (California cone), this protein is Conotoxin Cal6.17.